The following is a 238-amino-acid chain: Purine nucleoside phosphorylase DeoD-type (238 aa).

His-5 contributes to the a purine D-ribonucleoside binding site. Phosphate is bound by residues Gly-21, Arg-25, Arg-44, and 88–91 (RIGT). A purine D-ribonucleoside contacts are provided by residues 180-182 (DME) and 204-205 (SD). The active-site Proton donor is Asp-205.

It belongs to the PNP/UDP phosphorylase family. As to quaternary structure, homohexamer; trimer of homodimers.

It carries out the reaction a purine D-ribonucleoside + phosphate = a purine nucleobase + alpha-D-ribose 1-phosphate. The catalysed reaction is a purine 2'-deoxy-D-ribonucleoside + phosphate = a purine nucleobase + 2-deoxy-alpha-D-ribose 1-phosphate. In terms of biological role, catalyzes the reversible phosphorolytic breakdown of the N-glycosidic bond in the beta-(deoxy)ribonucleoside molecules, with the formation of the corresponding free purine bases and pentose-1-phosphate. This Buchnera aphidicola subsp. Baizongia pistaciae (strain Bp) protein is Purine nucleoside phosphorylase DeoD-type.